The primary structure comprises 168 residues: Ribosome maturation factor RimP (168 aa).

This sequence belongs to the RimP family.

Its subcellular location is the cytoplasm. Its function is as follows. Required for maturation of 30S ribosomal subunits. In Syntrophobacter fumaroxidans (strain DSM 10017 / MPOB), this protein is Ribosome maturation factor RimP.